The chain runs to 273 residues: Hydroxyethylthiazole kinase (273 aa).

M49 is a binding site for substrate. Positions 125 and 171 each coordinate ATP. G198 contributes to the substrate binding site.

The protein belongs to the Thz kinase family. Mg(2+) is required as a cofactor.

It catalyses the reaction 5-(2-hydroxyethyl)-4-methylthiazole + ATP = 4-methyl-5-(2-phosphooxyethyl)-thiazole + ADP + H(+). It participates in cofactor biosynthesis; thiamine diphosphate biosynthesis; 4-methyl-5-(2-phosphoethyl)-thiazole from 5-(2-hydroxyethyl)-4-methylthiazole: step 1/1. Its function is as follows. Catalyzes the phosphorylation of the hydroxyl group of 4-methyl-5-beta-hydroxyethylthiazole (THZ). This Desulforudis audaxviator (strain MP104C) protein is Hydroxyethylthiazole kinase.